The chain runs to 237 residues: Phosphoribosylaminoimidazole-succinocarboxamide synthase (237 aa).

This sequence belongs to the SAICAR synthetase family.

The catalysed reaction is 5-amino-1-(5-phospho-D-ribosyl)imidazole-4-carboxylate + L-aspartate + ATP = (2S)-2-[5-amino-1-(5-phospho-beta-D-ribosyl)imidazole-4-carboxamido]succinate + ADP + phosphate + 2 H(+). Its pathway is purine metabolism; IMP biosynthesis via de novo pathway; 5-amino-1-(5-phospho-D-ribosyl)imidazole-4-carboxamide from 5-amino-1-(5-phospho-D-ribosyl)imidazole-4-carboxylate: step 1/2. This chain is Phosphoribosylaminoimidazole-succinocarboxamide synthase, found in Listeria innocua serovar 6a (strain ATCC BAA-680 / CLIP 11262).